The primary structure comprises 191 residues: MPPEPLSLPLDLAPGLVDGDTFLSIMGALPTGVTVVTTLGPDGEPYGLTCSAACSVSKAPPLLLVCINRDSRVLKALLERGEFAVNVLRGGGESTSARFAAPVDDRFRDVRWEPGSAGGVPVMSADVVAHAECRVAAALDAGDHTIVIGAVVAGGPRPEVPSPLMYWRRSYARWPVEEDPRTAALTLAAEG.

Position 46-52 (46-52 (YGLTCSA)) interacts with FAD. S55 serves as a coordination point for NAD(+). 72–73 (RV) provides a ligand contact to FAD. Residues H144 and 166-169 (YWRR) contribute to the NAD(+) site.

This sequence belongs to the non-flavoprotein flavin reductase family.

The enzyme catalyses a reduced flavin + NAD(+) = an oxidized flavin + NADH + 2 H(+). Its function is as follows. Catalyzes the reduction of flavin by NADH. Subsequently, the reduced flavins is transferred to the tetracycline 7-halogenase CtcP. This is Flavin reductase (NADH) from Kitasatospora aureofaciens (Streptomyces aureofaciens).